The following is a 144-amino-acid chain: Phospholipase A2, membrane associated (144 aa).

Positions 1–20 (MKTLLLLAVIMAIGLLQVHG) are cleaved as a signal peptide. 7 cysteine pairs are disulfide-bonded: cysteine 46–cysteine 137, cysteine 48–cysteine 64, cysteine 63–cysteine 117, cysteine 69–cysteine 144, cysteine 70–cysteine 110, cysteine 79–cysteine 103, and cysteine 97–cysteine 108. Residues tyrosine 47, glycine 49, and serine 51 each contribute to the Ca(2+) site. Residue histidine 67 is part of the active site. Aspartate 68 contacts Ca(2+). Residue aspartate 111 is part of the active site.

Belongs to the phospholipase A2 family. Ca(2+) is required as a cofactor.

The protein resides in the secreted. It is found in the cell membrane. The protein localises to the mitochondrion outer membrane. The catalysed reaction is a 1,2-diacyl-sn-glycero-3-phosphoethanolamine + H2O = a 1-acyl-sn-glycero-3-phosphoethanolamine + a fatty acid + H(+). It carries out the reaction 1-hexadecanoyl-2-(9Z-octadecenoyl)-sn-glycero-3-phosphoethanolamine + H2O = 1-hexadecanoyl-sn-glycero-3-phosphoethanolamine + (9Z)-octadecenoate + H(+). The enzyme catalyses 1-hexadecanoyl-2-(9Z,12Z-octadecadienoyl)-sn-glycero-3-phosphoethanolamine + H2O = 1-hexadecanoyl-sn-glycero-3-phosphoethanolamine + (9Z,12Z)-octadecadienoate + H(+). It catalyses the reaction 1-hexadecanoyl-2-(5Z,8Z,11Z,14Z-eicosatetraenoyl)-sn-glycero-3-phosphoethanolamine + H2O = 1-hexadecanoyl-sn-glycero-3-phosphoethanolamine + (5Z,8Z,11Z,14Z)-eicosatetraenoate + H(+). The catalysed reaction is N-hexadecanoyl-1,2-di-(9Z-octadecenoyl)-sn-glycero-3-phosphoethanolamine + H2O = N-hexadecanoyl-1-(9Z-octadecenoyl)-sn-glycero-3-phosphoethanolamine + (9Z)-octadecenoate + H(+). It carries out the reaction 1,2-dihexadecanoyl-sn-glycero-3-phospho-(1'-sn-glycerol) + H2O = 1-hexadecanoyl-sn-glycero-3-phospho-(1'-sn-glycerol) + hexadecanoate + H(+). The enzyme catalyses 1-hexadecanoyl-2-(9Z-octadecenoyl)-sn-glycero-3-phosphoglycerol + H2O = 1-hexadecanoyl-sn-glycero-3-phosphoglycerol + (9Z)-octadecenoate + H(+). It catalyses the reaction 1-hexadecanoyl-2-(9Z-octadecenoyl)-sn-glycero-3-phospho-(1'-sn-glycerol) + H2O = 1-hexadecanoyl-sn-glycero-3-phospho-(1'-sn-glycerol) + (9Z)-octadecenoate + H(+). The catalysed reaction is a 1,2-diacyl-sn-glycero-3-phosphocholine + H2O = a 1-acyl-sn-glycero-3-phosphocholine + a fatty acid + H(+). It carries out the reaction 1,2-dihexadecanoyl-sn-glycero-3-phosphocholine + H2O = 1-hexadecanoyl-sn-glycero-3-phosphocholine + hexadecanoate + H(+). The enzyme catalyses 1-hexadecanoyl-2-(9Z-octadecenoyl)-sn-glycero-3-phosphocholine + H2O = 1-hexadecanoyl-sn-glycero-3-phosphocholine + (9Z)-octadecenoate + H(+). It catalyses the reaction 1-hexadecanoyl-2-(9Z,12Z-octadecadienoyl)-sn-glycero-3-phosphocholine + H2O = (9Z,12Z)-octadecadienoate + 1-hexadecanoyl-sn-glycero-3-phosphocholine + H(+). The catalysed reaction is 1-hexadecanoyl-2-(4Z,7Z,10Z,13Z,16Z,19Z-docosahexaenoyl)-sn-glycero-3-phosphocholine + H2O = (4Z,7Z,10Z,13Z,16Z,19Z)-docosahexaenoate + 1-hexadecanoyl-sn-glycero-3-phosphocholine + H(+). Functionally, secretory calcium-dependent phospholipase A2 that primarily targets extracellular phospholipids with implications in host antimicrobial defense, inflammatory response and tissue regeneration. Hydrolyzes the ester bond of the fatty acyl group attached at sn-2 position of phospholipids (phospholipase A2 activity) with preference for phosphatidylethanolamines and phosphatidylglycerols over phosphatidylcholines. Contributes to lipid remodeling of cellular membranes and generation of lipid mediators involved in pathogen clearance. Displays bactericidal activity against Gram-positive bacteria by directly hydrolyzing phospholipids of the bacterial membrane. Upon sterile inflammation, targets membrane phospholipids of extracellular mitochondria released from activated platelets, generating free unsaturated fatty acids such as arachidonate that is used by neighboring leukocytes to synthesize inflammatory eicosanoids such as leukotrienes. Simultaneously, by compromising mitochondrial membrane integrity, promotes the release in circulation of potent damage-associated molecular pattern molecules that activate the innate immune response. Plays a stem cell regulator role in the intestinal crypt. Within intracellular compartment mediates Paneth cell differentiation and its stem cell supporting functions by inhibiting Wnt signaling pathway in intestinal stem cell (ICS). Secreted in the intestinal lumen upon inflammation, acts in an autocrine way and promotes prostaglandin E2 synthesis that stimulates Wnt signaling pathway in ICS cells and tissue regeneration. May play a role in the biosynthesis of N-acyl ethanolamines that regulate energy metabolism and inflammation. Hydrolyzes N-acyl phosphatidylethanolamines to N-acyl lysophosphatidylethanolamines, which are further cleaved by a lysophospholipase D to release N-acyl ethanolamines. Independent of its catalytic activity, acts as a ligand for integrins. Binds to and activates integrins ITGAV:ITGB3, ITGA4:ITGB1 and ITGA5:ITGB1. Binds to a site (site 2) which is distinct from the classical ligand-binding site (site 1) and induces integrin conformational changes and enhanced ligand binding to site 1. Induces cell proliferation in an integrin-dependent manner. The protein is Phospholipase A2, membrane associated (PLA2G2A) of Bos taurus (Bovine).